A 1141-amino-acid chain; its full sequence is Serine-aspartate repeat-containing protein E (1141 aa).

Residues Met1–Ala52 form the signal peptide. The YSIRK-G/S signaling motif motif lies at Phe23–Ser34. Positions Ala53–Lys601 are ligand binding A region. Residues Glu54 to Glu225 form a disordered region. A compositionally biased stretch (basic and acidic residues) spans Ala61–Val75. The segment covering Glu77–Asn90 has biased composition (low complexity). A compositionally biased stretch (basic and acidic residues) spans Ile92–Thr109. Residues Lys110–Thr126 show a composition bias toward low complexity. Over residues Asn130–Thr145 the composition is skewed to basic and acidic residues. Residues Pro158 to Thr207 show a composition bias toward polar residues. The segment covering Ser216 to Glu225 has biased composition (basic and acidic residues). CNA-B domains follow at residues Leu602–Pro714, Lys715–Pro824, and Lys825–Thr935. The interval Val899–Ala1117 is disordered. Composition is skewed to acidic residues over residues Thr903–Glu913 and Tyr930–Ser1080. The LPXTG sorting signal motif lies at Leu1104–Gly1108. Thr1107 carries the pentaglycyl murein peptidoglycan amidated threonine modification. The propeptide at Gly1108–Lys1141 is removed by sortase.

This sequence belongs to the serine-aspartate repeat-containing protein (SDr) family. Interacts with host complement factor H/CFAH (via C-terminus). Interacts with host complement regulator C4BPA.

It is found in the secreted. The protein resides in the cell wall. Its function is as follows. Cell surface-associated calcium-binding protein which plays an important role in adhesion and pathogenesis. Contributes to the resistance to killing by innate immune components in blood and thus attenuates bacterial clearance by interacting with host complement factor H/CFAH and modulating its activity. Also inhibits bacterial opsonization and killing by interacting with host complement regulator C4BPA and thus inhibiting classical complement pathway activation. The polypeptide is Serine-aspartate repeat-containing protein E (sdrE) (Staphylococcus aureus (strain MSSA476)).